Here is a 1126-residue protein sequence, read N- to C-terminus: Ubiquitin carboxyl-terminal hydrolase 16/45 (1126 aa).

Residues 1-15 (MVKKRQADSRDHDCS) show a composition bias toward basic and acidic residues. The disordered stretch occupies residues 1-44 (MVKKRQADSRDHDCSTDSGNEDLHHRKGLGSPGQSDGATPTTAS). The span at 32-44 (PGQSDGATPTTAS) shows a compositional bias: polar residues. A UBP-type zinc finger spans residues 43–181 (ASCQHIKKAV…ELVKKLAQKP (139 aa)). 12 residues coordinate Zn(2+): Cys45, His47, Cys70, Cys73, Cys111, Cys114, Cys119, His126, His130, His139, Cys152, and Cys155. Low complexity-rich tracts occupy residues 215-229 (GGSF…SLAA) and 254-264 (SSGLSTSDSLT). A disordered region spans residues 215–264 (GGSFDDSSSRGSLAAAGGGGGVGSSRNRQVAIPMPPPEPSSGLSTSDSLT). The active-site Nucleophile is Cys315. Disordered stretches follow at residues 513–547 (KPQP…INTK), 570–762 (ASLG…SGSS), and 795–833 (EQGA…ARTK). The span at 524–539 (PELSLTSSSSSVTPST) shows a compositional bias: low complexity. The span at 586-598 (QRKAKRAAKKRQK) shows a compositional bias: basic residues. Composition is skewed to low complexity over residues 599-614 (SSLN…GNEL) and 646-657 (TEDSTTSSVTTS). Residues 674–701 (APSTNNVPSSTASLTAPSKTYMDSNGNA) are compositionally biased toward polar residues. Basic and acidic residues predominate over residues 705–718 (GEKRDDTPEHMDKD). A compositionally biased stretch (low complexity) spans 730-762 (ATSPAPTATNSSTSTSATGNNNSVAGSGLSGSS). A compositionally biased stretch (basic and acidic residues) spans 807 to 816 (GEAKAIEQPE). Residues 821–830 (QAQAMAQAQA) show a composition bias toward low complexity. His984 acts as the Proton acceptor in catalysis. Residues 1037-1089 (LKVLDDSDDFSNSSSNSSTSDESQTPATPLEEQQTQQAQQPQQPQQLEEAANV) form a disordered region. Residues 1046–1086 (FSNSSSNSSTSDESQTPATPLEEQQTQQAQQPQQPQQLEEA) are compositionally biased toward low complexity.

The protein belongs to the peptidase C19 family.

The enzyme catalyses Thiol-dependent hydrolysis of ester, thioester, amide, peptide and isopeptide bonds formed by the C-terminal Gly of ubiquitin (a 76-residue protein attached to proteins as an intracellular targeting signal).. Its function is as follows. Involved in the regulation of DNA damage repair. The sequence is that of Ubiquitin carboxyl-terminal hydrolase 16/45 from Drosophila melanogaster (Fruit fly).